Here is a 454-residue protein sequence, read N- to C-terminus: O-phospho-L-seryl-tRNA:Cys-tRNA synthase 2 (454 aa).

Pyridoxal 5'-phosphate-binding positions include 146–147 (AR), N251, and 274–276 (SGH). An N6-(pyridoxal phosphate)lysine modification is found at K277.

This sequence belongs to the SepCysS family. In terms of assembly, homodimer. Interacts with SepRS. Pyridoxal 5'-phosphate is required as a cofactor.

It catalyses the reaction O-phospho-L-seryl-tRNA(Cys) + hydrogen sulfide + H(+) = L-cysteinyl-tRNA(Cys) + phosphate. In terms of biological role, converts O-phospho-L-seryl-tRNA(Cys) (Sep-tRNA(Cys)) to L-cysteinyl-tRNA(Cys) (Cys-tRNA(Cys)). The sequence is that of O-phospho-L-seryl-tRNA:Cys-tRNA synthase 2 from Methanoregula boonei (strain DSM 21154 / JCM 14090 / 6A8).